Reading from the N-terminus, the 142-residue chain is Nucleoside diphosphate kinase (142 aa).

K11, F59, R87, T93, R104, and N114 together coordinate ATP. H117 functions as the Pros-phosphohistidine intermediate in the catalytic mechanism.

It belongs to the NDK family. The cofactor is Mg(2+).

The protein localises to the cytoplasm. The catalysed reaction is a 2'-deoxyribonucleoside 5'-diphosphate + ATP = a 2'-deoxyribonucleoside 5'-triphosphate + ADP. The enzyme catalyses a ribonucleoside 5'-diphosphate + ATP = a ribonucleoside 5'-triphosphate + ADP. Major role in the synthesis of nucleoside triphosphates other than ATP. The ATP gamma phosphate is transferred to the NDP beta phosphate via a ping-pong mechanism, using a phosphorylated active-site intermediate. This chain is Nucleoside diphosphate kinase, found in Hyperthermus butylicus (strain DSM 5456 / JCM 9403 / PLM1-5).